A 427-amino-acid chain; its full sequence is Aspartate aminotransferase, mitochondrial (427 aa).

Residues 1-26 constitute a mitochondrion transit peptide; that stretch reads MALLKSRLLVGVARCQPCLAAVQGRA. Substrate is bound by residues Gly-62, Trp-159, and Asn-212. Lys-276 is subject to N6-(pyridoxal phosphate)lysine. Position 404 (Arg-404) interacts with substrate.

Belongs to the class-I pyridoxal-phosphate-dependent aminotransferase family. As to quaternary structure, homodimer. Pyridoxal 5'-phosphate serves as cofactor.

It localises to the mitochondrion matrix. It carries out the reaction L-aspartate + 2-oxoglutarate = oxaloacetate + L-glutamate. It catalyses the reaction L-kynurenine + 2-oxoglutarate = kynurenate + L-glutamate + H2O. In terms of biological role, catalyzes the irreversible transamination of the L-tryptophan metabolite L-kynurenine to form kynurenic acid (KA). As a member of the malate-aspartate shuttle, it has a key role in the intracellular NAD(H) redox balance. Is important for metabolite exchange between mitochondria and cytosol, and for amino acid metabolism. The sequence is that of Aspartate aminotransferase, mitochondrial (got2) from Xenopus tropicalis (Western clawed frog).